The chain runs to 453 residues: UPF0210 protein Mbar_A3181 (453 aa).

Belongs to the UPF0210 family.

The sequence is that of UPF0210 protein Mbar_A3181 from Methanosarcina barkeri (strain Fusaro / DSM 804).